Here is a 944-residue protein sequence, read N- to C-terminus: Isoleucine--tRNA ligase (944 aa).

A 'HIGH' region motif is present at residues Pro58–His68. Glu563 is a binding site for L-isoleucyl-5'-AMP. A 'KMSKS' region motif is present at residues Lys604–Ser608. Lys607 is a binding site for ATP. Zn(2+) is bound by residues Cys907, Cys910, Cys927, and Cys930.

It belongs to the class-I aminoacyl-tRNA synthetase family. IleS type 1 subfamily. Monomer. It depends on Zn(2+) as a cofactor.

It localises to the cytoplasm. It catalyses the reaction tRNA(Ile) + L-isoleucine + ATP = L-isoleucyl-tRNA(Ile) + AMP + diphosphate. Functionally, catalyzes the attachment of isoleucine to tRNA(Ile). As IleRS can inadvertently accommodate and process structurally similar amino acids such as valine, to avoid such errors it has two additional distinct tRNA(Ile)-dependent editing activities. One activity is designated as 'pretransfer' editing and involves the hydrolysis of activated Val-AMP. The other activity is designated 'posttransfer' editing and involves deacylation of mischarged Val-tRNA(Ile). The protein is Isoleucine--tRNA ligase of Salmonella paratyphi A (strain ATCC 9150 / SARB42).